The following is a 539-amino-acid chain: Probable transcription factor GLK2 (539 aa).

Residues 86–218 are disordered; the sequence is FASSPDDEPP…NSHGKRKVKV (133 aa). Low complexity-rich tracts occupy residues 99-111 and 121-130; these read SAPGPGEPAAAAG and AAAAAAAAAA. Positions 144–161 are enriched in basic and acidic residues; the sequence is KKDDEERSSSLPEEKDAK. The HTH myb-type domain occupies 212 to 271; the sequence is GKRKVKVDWTPELHRRFVQAVEQLGIDKAVPSRILELMGIECLTRHNIASHLQKYRSHRK. The H-T-H motif DNA-binding region spans 242–267; the sequence is PSRILELMGIECLTRHNIASHLQKYR.

In terms of tissue distribution, expressed in leaves.

It is found in the nucleus. In terms of biological role, probable transcriptional activator that promotes chloroplast development. Acts as an activator of nuclear photosynthetic genes involved in chlorophyll biosynthesis, light harvesting, and electron transport. This Oryza sativa subsp. japonica (Rice) protein is Probable transcription factor GLK2 (GLK2).